Consider the following 467-residue polypeptide: Cytochrome c-552 (467 aa).

An N-terminal signal peptide occupies residues Met-1–Ala-27. His-87 is a heme c binding site. Heme contacts are provided by Cys-115, Cys-118, and Lys-119. Residues Cys-153, Cys-156, His-157, Cys-195, Cys-198, and His-199 each coordinate heme c. 4 residues coordinate Ca(2+): Glu-201, Tyr-202, Lys-250, and Gln-252. Tyr-202 lines the substrate pocket. His-253 contributes to the substrate binding site. Residues His-264, Cys-271, Cys-274, His-275, His-290, Cys-303, Cys-306, His-307, and His-382 each coordinate heme c.

It belongs to the cytochrome c-552 family. It depends on Ca(2+) as a cofactor. Requires heme c as cofactor.

It localises to the periplasm. The catalysed reaction is 6 Fe(III)-[cytochrome c] + NH4(+) + 2 H2O = 6 Fe(II)-[cytochrome c] + nitrite + 8 H(+). It participates in nitrogen metabolism; nitrate reduction (assimilation). In terms of biological role, catalyzes the reduction of nitrite to ammonia, consuming six electrons in the process. The polypeptide is Cytochrome c-552 (Shewanella amazonensis (strain ATCC BAA-1098 / SB2B)).